Reading from the N-terminus, the 131-residue chain is Two-component response regulator ORR3 (131 aa).

One can recognise a Response regulatory domain in the interval 12–129 (HVLAVDDSIV…DVSRLCNRVI (118 aa)). At D62 the chain carries 4-aspartylphosphate.

It belongs to the ARR family. Type-A subfamily. Post-translationally, two-component system major event consists of a His-to-Asp phosphorelay between a sensor histidine kinase (HK) and a response regulator (RR). In plants, the His-to-Asp phosphorelay involves an additional intermediate named Histidine-containing phosphotransfer protein (HPt). This multistep phosphorelay consists of a His-Asp-His-Asp sequential transfer of a phosphate group between first a His and an Asp of the HK protein, followed by the transfer to a conserved His of the HPt protein and finally the transfer to an Asp in the receiver domain of the RR protein. In terms of tissue distribution, expressed in roots, mature leaves and flowers, and at low levels in shoots.

Functionally, functions as a response regulator involved in His-to-Asp phosphorelay signal transduction system. Phosphorylation of the Asp residue in the receiver domain activates the ability of the protein to promote the transcription of target genes. Type-A response regulators seem to act as negative regulators of the cytokinin signaling. This chain is Two-component response regulator ORR3, found in Oryza sativa subsp. indica (Rice).